A 165-amino-acid polypeptide reads, in one-letter code: Putative 4-hydroxy-4-methyl-2-oxoglutarate aldolase (165 aa).

Substrate contacts are provided by residues 80 to 83 (GGNL) and R102. D103 provides a ligand contact to a divalent metal cation.

The protein belongs to the class II aldolase/RraA-like family. Homotrimer. Requires a divalent metal cation as cofactor.

It carries out the reaction 4-hydroxy-4-methyl-2-oxoglutarate = 2 pyruvate. It catalyses the reaction oxaloacetate + H(+) = pyruvate + CO2. In terms of biological role, catalyzes the aldol cleavage of 4-hydroxy-4-methyl-2-oxoglutarate (HMG) into 2 molecules of pyruvate. Also contains a secondary oxaloacetate (OAA) decarboxylase activity due to the common pyruvate enolate transition state formed following C-C bond cleavage in the retro-aldol and decarboxylation reactions. The sequence is that of Putative 4-hydroxy-4-methyl-2-oxoglutarate aldolase from Cupriavidus necator (strain ATCC 17699 / DSM 428 / KCTC 22496 / NCIMB 10442 / H16 / Stanier 337) (Ralstonia eutropha).